The chain runs to 139 residues: Small ribosomal subunit protein uS12 (139 aa).

The residue at position 102 (aspartate 102) is a 3-methylthioaspartic acid.

This sequence belongs to the universal ribosomal protein uS12 family. In terms of assembly, part of the 30S ribosomal subunit. Contacts proteins S8 and S17. May interact with IF1 in the 30S initiation complex.

Its function is as follows. With S4 and S5 plays an important role in translational accuracy. Interacts with and stabilizes bases of the 16S rRNA that are involved in tRNA selection in the A site and with the mRNA backbone. Located at the interface of the 30S and 50S subunits, it traverses the body of the 30S subunit contacting proteins on the other side and probably holding the rRNA structure together. The combined cluster of proteins S8, S12 and S17 appears to hold together the shoulder and platform of the 30S subunit. The sequence is that of Small ribosomal subunit protein uS12 from Mycoplasma capricolum subsp. capricolum (strain California kid / ATCC 27343 / NCTC 10154).